Reading from the N-terminus, the 630-residue chain is tRNA uridine 5-carboxymethylaminomethyl modification enzyme MnmG (630 aa).

13–18 lines the FAD pocket; that stretch reads GGGHAG. 273–287 serves as a coordination point for NAD(+); that stretch reads GPRYCPSIEDKIHRF.

It belongs to the MnmG family. Homodimer. Heterotetramer of two MnmE and two MnmG subunits. It depends on FAD as a cofactor.

The protein localises to the cytoplasm. NAD-binding protein involved in the addition of a carboxymethylaminomethyl (cmnm) group at the wobble position (U34) of certain tRNAs, forming tRNA-cmnm(5)s(2)U34. This chain is tRNA uridine 5-carboxymethylaminomethyl modification enzyme MnmG, found in Pseudomonas entomophila (strain L48).